A 711-amino-acid polypeptide reads, in one-letter code: DNA ligase (711 aa).

The segment at 1–29 (MSEDAIGQQVPAAQEAAAGAEPNSAARER) is disordered. Residues 12–25 (AAQEAAAGAEPNSA) are compositionally biased toward low complexity. NAD(+) is bound by residues 54–58 (DAAFD), 103–104 (SL), and glutamate 133. Catalysis depends on lysine 135, which acts as the N6-AMP-lysine intermediate. Residues arginine 156, glutamate 197, lysine 313, and lysine 337 each contribute to the NAD(+) site. Zn(2+) contacts are provided by cysteine 431, cysteine 434, cysteine 450, and cysteine 456. The region spanning 620–709 (QGPRPLEGVT…PEAARAVARV (90 aa)) is the BRCT domain.

This sequence belongs to the NAD-dependent DNA ligase family. LigA subfamily. The cofactor is Mg(2+). Mn(2+) serves as cofactor.

It catalyses the reaction NAD(+) + (deoxyribonucleotide)n-3'-hydroxyl + 5'-phospho-(deoxyribonucleotide)m = (deoxyribonucleotide)n+m + AMP + beta-nicotinamide D-nucleotide.. Functionally, DNA ligase that catalyzes the formation of phosphodiester linkages between 5'-phosphoryl and 3'-hydroxyl groups in double-stranded DNA using NAD as a coenzyme and as the energy source for the reaction. It is essential for DNA replication and repair of damaged DNA. This chain is DNA ligase, found in Salinispora tropica (strain ATCC BAA-916 / DSM 44818 / JCM 13857 / NBRC 105044 / CNB-440).